Reading from the N-terminus, the 529-residue chain is DEP domain-containing protein 1B (529 aa).

One can recognise a DEP domain in the interval 24 to 108 (FRARMPLRRH…DNRHLYRFPP (85 aa)). S160 is modified (phosphoserine). A Rho-GAP domain is found at 201-393 (DSLEEVLNTK…FLMDNYQEIL (193 aa)). The residue at position 436 (S436) is a Phosphoserine.

The chain is DEP domain-containing protein 1B (Depdc1b) from Mus musculus (Mouse).